The primary structure comprises 181 residues: Adenylate kinase (181 aa).

Position 10–15 (10–15) interacts with ATP; the sequence is GAGKGT. The NMP stretch occupies residues 30–59; that stretch reads STGDLFRYNISNGTELGLEAKKYLDAGDLV. AMP is bound by residues Thr31, Arg36, 57–59, 85–88, and Gln92; these read DLV and GYPR. The tract at residues 126–132 is LID; sequence GRGRDDD. Arg127 provides a ligand contact to ATP. AMP is bound by residues Arg129 and Arg140. Gly166 contributes to the ATP binding site.

This sequence belongs to the adenylate kinase family. Monomer.

The protein resides in the cytoplasm. It carries out the reaction AMP + ATP = 2 ADP. Its pathway is purine metabolism; AMP biosynthesis via salvage pathway; AMP from ADP: step 1/1. In terms of biological role, catalyzes the reversible transfer of the terminal phosphate group between ATP and AMP. Plays an important role in cellular energy homeostasis and in adenine nucleotide metabolism. This chain is Adenylate kinase, found in Mycolicibacterium vanbaalenii (strain DSM 7251 / JCM 13017 / BCRC 16820 / KCTC 9966 / NRRL B-24157 / PYR-1) (Mycobacterium vanbaalenii).